The sequence spans 128 residues: Large ribosomal subunit protein uL24 (128 aa).

Residues 105–128 (KAKSRQVGKEKGKYKEETIEKMQE) form a disordered region.

The protein belongs to the universal ribosomal protein uL24 family. Component of the large ribosomal subunit.

It is found in the cytoplasm. Functionally, component of the large ribosomal subunit. The ribosome is a large ribonucleoprotein complex responsible for the synthesis of proteins in the cell. The polypeptide is Large ribosomal subunit protein uL24 (RPL26) (Gallus gallus (Chicken)).